A 93-amino-acid polypeptide reads, in one-letter code: Small ribosomal subunit protein uS15 (93 aa).

This sequence belongs to the universal ribosomal protein uS15 family. As to quaternary structure, part of the 30S ribosomal subunit. Forms a bridge to the 50S subunit in the 70S ribosome, contacting the 23S rRNA.

Functionally, one of the primary rRNA binding proteins, it binds directly to 16S rRNA where it helps nucleate assembly of the platform of the 30S subunit by binding and bridging several RNA helices of the 16S rRNA. Forms an intersubunit bridge (bridge B4) with the 23S rRNA of the 50S subunit in the ribosome. The polypeptide is Small ribosomal subunit protein uS15 (Anaplasma marginale (strain St. Maries)).